Consider the following 512-residue polypeptide: Circadian clock oscillator protein KaiC (512 aa).

2 KaiC domains span residues 1 to 243 (MQFP…ISIF) and 257 to 512 (VRVS…SSED). Positions 45, 46, 47, 48, 49, 85, 220, 221, 222, 224, 226, 286, 287, 288, 289, 290, 291, and 292 each coordinate ATP. Threonine 49 provides a ligand contact to Mg(2+). Residue threonine 291 participates in Mg(2+) binding. Position 314 (glutamate 314) interacts with Mg(2+). Tryptophan 327 contacts ATP. Phosphoserine; by autocatalysis is present on serine 427. At threonine 428 the chain carries Phosphothreonine; by autocatalysis. Positions 447, 453, 454, 455, 457, 459, and 461 each coordinate ATP.

The protein belongs to the KaiC family. As to quaternary structure, homohexamer; hexamerization is dependent on ATP-binding. The KaiABC complex composition changes during the circadian cycle to control KaiC phosphorylation. Complexes KaiC(6), KaiA(2-4):KaiC(6), KaiB(6):KaiC(6) and KaiC(6):KaiB(6):KaiA(12) are among the most important forms, many form cooperatively. KaiC interacts with SasA, activating its autokinase function and leading to RpaA activation. It depends on Mg(2+) as a cofactor. In terms of processing, phosphorylated on serine and threonine residues by autocatalysis. Has a 4 step phosphorylation cycle; the autokinase acts first on Thr-428, then Ser-427. When Ser-427 is modified KaiC switches to an autophosphatase mode, acting first on phospho-Thr-428 then phospho-Ser-427.

It catalyses the reaction L-seryl-[protein] + ATP = O-phospho-L-seryl-[protein] + ADP + H(+). The catalysed reaction is L-threonyl-[protein] + ATP = O-phospho-L-threonyl-[protein] + ADP + H(+). It carries out the reaction ATP + H2O = ADP + phosphate + H(+). With respect to regulation, the interaction with KaiA enhances its phosphorylation status, while the interaction with KaiB decreases it. Functionally, central component of the KaiABC oscillator complex, which constitutes the main circadian regulator in cyanobacteria. Complex composition changes during the circadian cycle to control KaiC phosphorylation. KaiA stimulates KaiC autophosphorylation, while KaiB sequesters KaiA, leading to KaiC autodephosphorylation. Clock output pathways impact the RpaA transcriptional regulator. KaiC enhances the autophosphorylation activity of SasA, which then transfers its phosphate group to RpaA to activate it. KaiB and KaiC together enhance the phospho-RpaA dephosphatase activity of CikA. Its function is as follows. Has a weak, temperature-independent ATPase activity; ATPase activity defines the circadian period. The phosphorylation state of KaiC modulates its ATPase activity and effects KaiB binding. In Parasynechococcus marenigrum (strain WH8102), this protein is Circadian clock oscillator protein KaiC.